The chain runs to 80 residues: Crustacean hyperglycemic hormones (80 aa).

3 disulfide bridges follow: Cys-13–Cys-49, Cys-29–Cys-45, and Cys-32–Cys-58. Val-78 bears the Valine amide mark.

The protein belongs to the arthropod CHH/MIH/GIH/VIH hormone family. In terms of tissue distribution, produced by the medulla terminalis X-organ in the eyestalks and transported to the sinus gland where they are stored and released.

The protein localises to the secreted. In terms of biological role, hormone found in the sinus gland of isopods and decapods which controls the blood sugar level. Has a secretagogue action over the amylase released from the midgut gland. May act as a stress hormone and may be involved in the control of molting and reproduction. The sequence is that of Crustacean hyperglycemic hormones from Penaeus vannamei (Whiteleg shrimp).